Reading from the N-terminus, the 365-residue chain is UDP-N-acetylglucosamine--N-acetylmuramyl-(pentapeptide) pyrophosphoryl-undecaprenol N-acetylglucosamine transferase (365 aa).

Residues 13–15 (TGG), N125, R165, S192, and Q293 each bind UDP-N-acetyl-alpha-D-glucosamine.

Belongs to the glycosyltransferase 28 family. MurG subfamily.

The protein resides in the cell inner membrane. The catalysed reaction is di-trans,octa-cis-undecaprenyl diphospho-N-acetyl-alpha-D-muramoyl-L-alanyl-D-glutamyl-meso-2,6-diaminopimeloyl-D-alanyl-D-alanine + UDP-N-acetyl-alpha-D-glucosamine = di-trans,octa-cis-undecaprenyl diphospho-[N-acetyl-alpha-D-glucosaminyl-(1-&gt;4)]-N-acetyl-alpha-D-muramoyl-L-alanyl-D-glutamyl-meso-2,6-diaminopimeloyl-D-alanyl-D-alanine + UDP + H(+). It functions in the pathway cell wall biogenesis; peptidoglycan biosynthesis. Functionally, cell wall formation. Catalyzes the transfer of a GlcNAc subunit on undecaprenyl-pyrophosphoryl-MurNAc-pentapeptide (lipid intermediate I) to form undecaprenyl-pyrophosphoryl-MurNAc-(pentapeptide)GlcNAc (lipid intermediate II). The chain is UDP-N-acetylglucosamine--N-acetylmuramyl-(pentapeptide) pyrophosphoryl-undecaprenol N-acetylglucosamine transferase from Ruegeria pomeroyi (strain ATCC 700808 / DSM 15171 / DSS-3) (Silicibacter pomeroyi).